A 361-amino-acid chain; its full sequence is Phospho-N-acetylmuramoyl-pentapeptide-transferase (361 aa).

10 helical membrane passes run 27–47 (ILASLTALIVGLLCGPLMIRW), 70–90 (GTPTMGGVLILLAITVSCLLW), 97–117 (SLWLVLLVTLANGLVGWVDDY), 134–154 (YFWQSVIALVAVSYLYWNASL), 167–187 (TVTWDLGVFFPVLAYFVIVGS), 199–219 (GLAIMPIVMVAGALGVFAYAS), 236–256 (TGELTIFCSSIVGAGLGFLWY), 263–283 (VFMGDVGSLALGAALGIVAIV), 288–308 (LVLLIMGGLFVIETLSVILQV), and 338–358 (KVIVRFWIITVVFVLCGLATL).

This sequence belongs to the glycosyltransferase 4 family. MraY subfamily. Mg(2+) serves as cofactor.

Its subcellular location is the cell inner membrane. It carries out the reaction UDP-N-acetyl-alpha-D-muramoyl-L-alanyl-gamma-D-glutamyl-meso-2,6-diaminopimeloyl-D-alanyl-D-alanine + di-trans,octa-cis-undecaprenyl phosphate = di-trans,octa-cis-undecaprenyl diphospho-N-acetyl-alpha-D-muramoyl-L-alanyl-D-glutamyl-meso-2,6-diaminopimeloyl-D-alanyl-D-alanine + UMP. Its pathway is cell wall biogenesis; peptidoglycan biosynthesis. Functionally, catalyzes the initial step of the lipid cycle reactions in the biosynthesis of the cell wall peptidoglycan: transfers peptidoglycan precursor phospho-MurNAc-pentapeptide from UDP-MurNAc-pentapeptide onto the lipid carrier undecaprenyl phosphate, yielding undecaprenyl-pyrophosphoryl-MurNAc-pentapeptide, known as lipid I. In Legionella pneumophila (strain Paris), this protein is Phospho-N-acetylmuramoyl-pentapeptide-transferase.